Reading from the N-terminus, the 308-residue chain is Transcriptional adapter 1-2 (308 aa).

The protein belongs to the TADA1 family. In terms of assembly, component of the Spt-Ada-Gcn5 acetyltransferase (SAGA) complex consisting of wda/Taf5L, Saf6, Taf9, Taf10b, Taf12, Ada1, Spt3, Spt7, Spt20, Sf3b3, Sf3b5, Nipped-A/Tra1, a histone acetyltransferase (HAT) module made up of Gcn5, Ada2b (Isoform B), Ada3 and Sgf29, and a deubiquitinase (DUB) module made up of not/nonstop, Sgf11 and e(y)2 tethered to SAGA by Atxn7. Not a component of the Ada2a-containing ATAC complex.

It is found in the nucleus. In terms of biological role, component of the transcription regulatory complex SAGA, a multiprotein complex that activates transcription by remodeling chromatin and mediating histone acetylation and deubiquitination. The SAGA complex predominantly acetylates histone H3. This chain is Transcriptional adapter 1-2, found in Drosophila melanogaster (Fruit fly).